We begin with the raw amino-acid sequence, 615 residues long: Filament-like plant protein 3 (615 aa).

Over residues M1–G18 the composition is skewed to basic and acidic residues. The disordered stretch occupies residues M1–A55. The span at E19–S28 shows a compositional bias: polar residues. Over residues H29–R38 the composition is skewed to basic and acidic residues. Residues S39–P48 show a composition bias toward polar residues. 2 coiled-coil regions span residues A87–R121 and E148–E211. Disordered stretches follow at residues D258 to E289 and P319 to Q343. Polar residues predominate over residues D262 to S288. Positions E322–Q343 are enriched in basic and acidic residues. Positions H327–T563 form a coiled coil.

The protein belongs to the FPP family. As to quaternary structure, interacts with WPP/MAF proteins. Binds to COG2; this interaction promotes the association between cortical microtubules and EXO70A1. In terms of tissue distribution, accumulates in preferentially xylem cells.

The protein resides in the vesicle. Functionally, ensures, when in complex with COG2 and FPP2/VETH2, the correct secondary cell wall (SCW) deposition pattern by recruiting exocyst components to cortical microtubules in xylem cells during secondary cell wall deposition by recruiting EXO70A1. This is Filament-like plant protein 3 from Arabidopsis thaliana (Mouse-ear cress).